Consider the following 136-residue polypeptide: Small ribosomal subunit protein uS9 (136 aa).

Positions 115-136 (KVKERKKPGLRKARKARQFSKR) are disordered. A compositionally biased stretch (basic residues) spans 117-136 (KERKKPGLRKARKARQFSKR).

It belongs to the universal ribosomal protein uS9 family.

This chain is Small ribosomal subunit protein uS9, found in Mycoplasmopsis pulmonis (strain UAB CTIP) (Mycoplasma pulmonis).